The primary structure comprises 942 residues: UvrABC system protein A (942 aa).

Residue 31–38 (GLSGSGKS) participates in ATP binding. Residues 253–280 (CSECGYSLPELEPRLFSFNNPAGACPTC) form a C4-type zinc finger. ABC transporter domains lie at 310–586 (WDRR…EASI) and 606–936 (YDAN…RFLT). Residue 639-646 (GVSGSGKS) coordinates ATP. The C4-type zinc-finger motif lies at 739 to 765 (CEACQGDGVIKVEMHFLPDVYVPCDHC).

Belongs to the ABC transporter superfamily. UvrA family. In terms of assembly, forms a heterotetramer with UvrB during the search for lesions.

It localises to the cytoplasm. Its function is as follows. The UvrABC repair system catalyzes the recognition and processing of DNA lesions. UvrA is an ATPase and a DNA-binding protein. A damage recognition complex composed of 2 UvrA and 2 UvrB subunits scans DNA for abnormalities. When the presence of a lesion has been verified by UvrB, the UvrA molecules dissociate. This chain is UvrABC system protein A, found in Haemophilus ducreyi (strain 35000HP / ATCC 700724).